A 468-amino-acid chain; its full sequence is Keratin, type I cytoskeletal 26 (468 aa).

The segment at 1–82 is head; sequence MSFRLSGGSR…GNEHSLLSGN (82 aa). The coil 1A stretch occupies residues 83–118; the sequence is EKVTMQNLNDRLASYLDHVHALEEANADLEQKIKGW. The IF rod domain occupies 83-398; the sequence is EKVTMQNLND…NLLDGEERKS (316 aa). The segment at 119–140 is linker 1; sequence YEKCEPGSSREHDHDYSRYFSV. Residues 141–232 form a coil 1B region; sequence IEDLKRQIIS…KSHEEEMEVL (92 aa). The segment at 233-255 is linker 12; it reads QYTAGGNVNVEMNATPGVDLTVL. The interval 256 to 394 is coil 2; sequence LNNMRAEYED…DIYCNLLDGE (139 aa). Residues 395–465 form a tail region; the sequence is ERKSKSTCYK…NITVEQRVPS (71 aa).

The protein belongs to the intermediate filament family. In terms of assembly, heterotetramer of two type I and two type II keratins. In terms of tissue distribution, strongly expressed in skin and scalp, and weak expression observed in thymus and tongue. In the hair follicle, expression is restricted to the mid- to upper inner root sheath cuticle, being present slightly above the apex of the dermal papilla (at protein level).

The polypeptide is Keratin, type I cytoskeletal 26 (Homo sapiens (Human)).